We begin with the raw amino-acid sequence, 101 residues long: Small ribosomal subunit protein uS14 (101 aa).

Basic and acidic residues predominate over residues 1–10 (MAKKSSIEKN). A disordered region spans residues 1–23 (MAKKSSIEKNNRRKRMVKNAAPK).

This sequence belongs to the universal ribosomal protein uS14 family. In terms of assembly, part of the 30S ribosomal subunit. Contacts proteins S3 and S10.

Functionally, binds 16S rRNA, required for the assembly of 30S particles and may also be responsible for determining the conformation of the 16S rRNA at the A site. The polypeptide is Small ribosomal subunit protein uS14 (Bradyrhizobium diazoefficiens (strain JCM 10833 / BCRC 13528 / IAM 13628 / NBRC 14792 / USDA 110)).